The sequence spans 290 residues: Glutaredoxin domain-containing cysteine-rich protein 1 (290 aa).

In terms of domain architecture, Glutaredoxin spans 127–234 (LQQPSTDLEF…DILTKIERVQ (108 aa)).

This sequence belongs to the GRXCR1 family. Expressed at low levels in adult lung, brain and duodenum with moderate levels in testis. Highly expressed in fetal cochlea.

It is found in the cell projection. It localises to the stereocilium. Its subcellular location is the microvillus. The protein resides in the kinocilium. Functionally, may play a role in actin filament architecture in developing stereocilia of sensory cells. The sequence is that of Glutaredoxin domain-containing cysteine-rich protein 1 (GRXCR1) from Homo sapiens (Human).